An 854-amino-acid polypeptide reads, in one-letter code: SH2 domain-containing protein 3C (854 aa).

A Phosphoserine modification is found at Ser22. Over residues 34-43 (RSSASASIRS) the composition is skewed to low complexity. Residues 34–129 (RSSASASIRS…AKEAGEGTEA (96 aa)) form a disordered region. Residues 99 to 124 (EVSRESHLVSRRLPEPPDLEAAKEAG) are compositionally biased toward basic and acidic residues. Residues 215–314 (WYHGRIPREV…QSGAIIYCPV (100 aa)) form the SH2 domain. Tyr273 and Tyr278 each carry phosphotyrosine. Disordered regions lie at residues 330 to 384 (SQGS…PRDS), 398 to 417 (LHSP…YSTV), and 422 to 520 (APSA…ERQK). Low complexity predominate over residues 333-347 (SSKTASPASPSGSKG). Ser354 is subject to Phosphoserine. Low complexity-rich tracts occupy residues 400 to 415 (SPLS…PAYS), 422 to 436 (APSA…PASP), and 474 to 485 (SPSPSLSSYSDP). Ser435 bears the Phosphoserine mark. Positions 508–520 (TPRKARGSGERQK) are enriched in basic and acidic residues. Residues 580–848 (DARTLARHVT…TALSHKLEPA (269 aa)) form the Ras-GEF domain. Tyr787 is subject to Phosphotyrosine.

As to quaternary structure, component of a complex comprised of SH2D3C, BCAR1/CAS, and CRK. Within the complex, interacts with CRK and (via C-terminus) with BCAR1/CAS (via C-terminus). Interacts with NEDD9/HEF1. Interacts with EPHB2. In terms of assembly, interacts with NEDD9/HEF1. Interacts with BCAR1/CAS. Interacts with PTK2B. Interacts (via C-terminus) with BCAR1/CAS (via C-terminus). Interacts with IGF1. Post-translationally, phosphorylated by MAPK/ERK upon T-cell receptor stimulation in T-cells. As to expression, expressed in the olfactory bulb and olfactory sensory neurons (at protein level). Expressed in B cells (at protein level). Expressed in T lymphocytes. In terms of tissue distribution, expressed in hematopoietic cells from spleen, lymph node and thymus (at protein level). Expressed weakly in the lung (at protein level). Expressed in the brain, lung, kidney, and weakly expressed in the liver and lung (at protein level).

It is found in the cytoplasm. The protein resides in the cell membrane. It localises to the cell projection. Its subcellular location is the axon. The protein localises to the ruffle membrane. Acts as an adapter protein that mediates cell signaling pathways involved in cellular functions such as cell adhesion and migration, tissue organization, and the regulation of the immune response. Plays a role in integrin-mediated cell adhesion through BCAR1-CRK-RAPGEF1 signaling and activation of the small GTPase RAP1. Promotes cell migration and invasion through the extracellular matrix. Required for marginal zone B-cell development and thymus-independent type 2 immune responses. Mediates migration and adhesion of B cells in the splenic marginal zone via promoting hyperphosphorylation of NEDD9/CASL. Plays a role in CXCL13-induced chemotaxis of B-cells. Plays a role in the migration of olfactory sensory neurons (OSNs) into the forebrain and the innervation of the olfactory bulb by the OSN axons during development. Required for the efficient tyrosine phosphorylation of BCAR1 in OSN axons. In terms of biological role, important regulator of chemokine-induced, integrin-mediated T lymphocyte adhesion and migration, acting upstream of RAP1. Required for tissue-specific adhesion of T lymphocytes to peripheral tissues. Required for basal and CXCL2 stimulated serine-threonine phosphorylation of NEDD9. May be involved in the regulation of T-cell receptor-mediated IL2 production through the activation of the JNK pathway in T-cells. Functionally, may be involved in the BCAR1/CAS-mediated JNK activation pathway. The sequence is that of SH2 domain-containing protein 3C (Sh2d3c) from Mus musculus (Mouse).